Consider the following 492-residue polypeptide: Probable cytochrome P450 513A3 (492 aa).

A helical membrane pass occupies residues 1–21; it reads MTSLTLYLIIFSIILYLFVNR. Cys-437 provides a ligand contact to heme.

The protein belongs to the cytochrome P450 family. Requires heme as cofactor.

The protein resides in the membrane. The protein is Probable cytochrome P450 513A3 (cyp513A3) of Dictyostelium discoideum (Social amoeba).